The sequence spans 1169 residues: DNA repair protein RAD5 (1169 aa).

Ser2 carries the post-translational modification N-acetylserine. Phosphoserine occurs at positions 20, 23, 129, and 130. Residues 302–317 (MKRRRTEGGNKREKDN) are compositionally biased toward basic and acidic residues. Residues 302–327 (MKRRRTEGGNKREKDNGNFGRTLTET) are disordered. In terms of domain architecture, Helicase ATP-binding spans 519-730 (PILKTMIKGG…YSLVKFLELD (212 aa)). 532–539 (DEMGLGKT) is an ATP binding site. Residues 681–684 (DEGH) carry the DEGH box motif. An RING-type zinc finger spans residues 914-961 (CSICTTEPMDLDKALFTECGHSFCEKCLFEYIEFQNSKNLGLKCPNCR). The Helicase C-terminal domain maps to 995 to 1165 (KITALLKELQ…RRKRRIEEIQ (171 aa)).

This sequence belongs to the SNF2/RAD54 helicase family. In terms of assembly, homodimer. Interacts with POL30, RAD18, UBC9 and UBC13. It depends on Mg(2+) as a cofactor. Mn(2+) is required as a cofactor. The cofactor is Ca(2+).

It is found in the cytoplasm. It localises to the nucleus. Functionally, probable helicase, member of the UBC2/RAD6 epistasis group. Functions with the DNA repair protein RAD18 in error-free postreplication DNA repair. Involved in the maintenance of wild-type rates of instability of simple repetitive sequences such as poly(GT) repeats. Seems to be involved in maintaining a balance which acts in favor of error-prone non-homologous joining during DNA double-strand breaks repairs. Recruits the UBC13-MMS2 dimer to chromatin for DNA repair. The protein is DNA repair protein RAD5 (RAD5) of Saccharomyces cerevisiae (strain ATCC 204508 / S288c) (Baker's yeast).